The chain runs to 274 residues: NADPH-dependent 7-cyano-7-deazaguanine reductase (274 aa).

80-82 (VES) provides a ligand contact to substrate. 82–83 (SK) contacts NADPH. Residue Cys181 is the Thioimide intermediate of the active site. Residue Asp188 is the Proton donor of the active site. 220-221 (HE) is a substrate binding site. 249–250 (RG) lines the NADPH pocket.

This sequence belongs to the GTP cyclohydrolase I family. QueF type 2 subfamily. In terms of assembly, homodimer.

Its subcellular location is the cytoplasm. The enzyme catalyses 7-aminomethyl-7-carbaguanine + 2 NADP(+) = 7-cyano-7-deazaguanine + 2 NADPH + 3 H(+). It participates in tRNA modification; tRNA-queuosine biosynthesis. Functionally, catalyzes the NADPH-dependent reduction of 7-cyano-7-deazaguanine (preQ0) to 7-aminomethyl-7-deazaguanine (preQ1). In Burkholderia ambifaria (strain ATCC BAA-244 / DSM 16087 / CCUG 44356 / LMG 19182 / AMMD) (Burkholderia cepacia (strain AMMD)), this protein is NADPH-dependent 7-cyano-7-deazaguanine reductase.